The primary structure comprises 331 residues: Bifunctional nuclease (331 aa).

A BFN domain is found at 126–261 (CVQNNPRVLR…RIAYNNGLKV (136 aa)). The UVR domain occupies 291–326 (EAQEFDLVRNMLVAAVEERYKDAAQYRDQLFMFRAK).

Belongs to the bifunctional nuclease family.

Its subcellular location is the nucleus. Bifunctional nuclease with both RNase and DNase activities. Involved in basal defense response. Participates in abscisic acid-derived callose deposition following infection by a necrotrophic pathogen. The polypeptide is Bifunctional nuclease (BBD) (Oryza minuta).